A 482-amino-acid chain; its full sequence is Aspartyl/glutamyl-tRNA(Asn/Gln) amidotransferase subunit B (482 aa).

It belongs to the GatB/GatE family. GatB subfamily. Heterotrimer of A, B and C subunits.

The catalysed reaction is L-glutamyl-tRNA(Gln) + L-glutamine + ATP + H2O = L-glutaminyl-tRNA(Gln) + L-glutamate + ADP + phosphate + H(+). The enzyme catalyses L-aspartyl-tRNA(Asn) + L-glutamine + ATP + H2O = L-asparaginyl-tRNA(Asn) + L-glutamate + ADP + phosphate + 2 H(+). Its function is as follows. Allows the formation of correctly charged Asn-tRNA(Asn) or Gln-tRNA(Gln) through the transamidation of misacylated Asp-tRNA(Asn) or Glu-tRNA(Gln) in organisms which lack either or both of asparaginyl-tRNA or glutaminyl-tRNA synthetases. The reaction takes place in the presence of glutamine and ATP through an activated phospho-Asp-tRNA(Asn) or phospho-Glu-tRNA(Gln). The sequence is that of Aspartyl/glutamyl-tRNA(Asn/Gln) amidotransferase subunit B from Thermotoga neapolitana (strain ATCC 49049 / DSM 4359 / NBRC 107923 / NS-E).